Here is a 678-residue protein sequence, read N- to C-terminus: DNA ligase (678 aa).

NAD(+) contacts are provided by residues aspartate 36–aspartate 40, serine 85–leucine 86, and glutamate 117. The N6-AMP-lysine intermediate role is filled by lysine 119. Positions 140, 177, 294, and 318 each coordinate NAD(+). Zn(2+) contacts are provided by cysteine 412, cysteine 415, cysteine 430, and cysteine 436. The BRCT domain maps to isoleucine 595–valine 678.

The protein belongs to the NAD-dependent DNA ligase family. LigA subfamily. The cofactor is Mg(2+). Mn(2+) is required as a cofactor.

It catalyses the reaction NAD(+) + (deoxyribonucleotide)n-3'-hydroxyl + 5'-phospho-(deoxyribonucleotide)m = (deoxyribonucleotide)n+m + AMP + beta-nicotinamide D-nucleotide.. Functionally, DNA ligase that catalyzes the formation of phosphodiester linkages between 5'-phosphoryl and 3'-hydroxyl groups in double-stranded DNA using NAD as a coenzyme and as the energy source for the reaction. It is essential for DNA replication and repair of damaged DNA. The protein is DNA ligase of Dichelobacter nodosus (strain VCS1703A).